The chain runs to 481 residues: Glutamate--tRNA ligase (481 aa).

The 'HIGH' region motif lies at 11 to 21 (PSPTGLLHIGN). The 'KMSKS' region signature appears at 255 to 259 (KLSKR). ATP is bound at residue Lys258.

This sequence belongs to the class-I aminoacyl-tRNA synthetase family. Glutamate--tRNA ligase type 1 subfamily. In terms of assembly, monomer.

Its subcellular location is the cytoplasm. It catalyses the reaction tRNA(Glu) + L-glutamate + ATP = L-glutamyl-tRNA(Glu) + AMP + diphosphate. Catalyzes the attachment of glutamate to tRNA(Glu) in a two-step reaction: glutamate is first activated by ATP to form Glu-AMP and then transferred to the acceptor end of tRNA(Glu). This Streptococcus pyogenes serotype M4 (strain MGAS10750) protein is Glutamate--tRNA ligase.